Here is a 705-residue protein sequence, read N- to C-terminus: Endoglucanase (705 aa).

A signal peptide spans 1–23 (MKILKNCILLIIFGLLSTQLINA). N-linked (GlcNAc...) asparagine glycosylation is present at Asn75. The active-site Nucleophile is Asp85. Active-site residues include His390, Asp428, and Glu437. The disordered stretch occupies residues 455 to 556 (NPSSTSVPTT…TPTETPSSGE (102 aa)). Over residues 462-552 (PTTTPTVTET…TPTVTPTETP (91 aa)) the composition is skewed to low complexity. Residues 463 to 552 (TTTPTVTETP…TPTVTPTETP (90 aa)) form a pro/Thr repeats ('hinge') (Pro/Thr box) region.

The protein belongs to the glycosyl hydrolase 9 (cellulase E) family.

It catalyses the reaction Endohydrolysis of (1-&gt;4)-beta-D-glucosidic linkages in cellulose, lichenin and cereal beta-D-glucans.. Functionally, may digest the spore cell wall during germination, to release the enclosed amoeba. This chain is Endoglucanase (celA), found in Dictyostelium discoideum (Social amoeba).